A 183-amino-acid polypeptide reads, in one-letter code: Adenylate kinase (183 aa).

Residue 12-17 (GAGKGT) participates in ATP binding. The segment at 32 to 61 (STGDLLRSEVSAGSALGQEAEAVMNRGELV) is NMP. AMP is bound by residues T33, R38, 59-61 (ELV), 86-89 (GFPR), and Q93. The tract at residues 127-133 (ARGRADD) is LID. ATP is bound at residue R128. Residues R130 and R141 each coordinate AMP. G169 is a binding site for ATP.

Belongs to the adenylate kinase family. As to quaternary structure, monomer.

It is found in the cytoplasm. The enzyme catalyses AMP + ATP = 2 ADP. Its pathway is purine metabolism; AMP biosynthesis via salvage pathway; AMP from ADP: step 1/1. Its function is as follows. Catalyzes the reversible transfer of the terminal phosphate group between ATP and AMP. Plays an important role in cellular energy homeostasis and in adenine nucleotide metabolism. In Synechococcus sp. (strain WH7803), this protein is Adenylate kinase.